The sequence spans 166 residues: Large ribosomal subunit protein uL10 (166 aa).

This sequence belongs to the universal ribosomal protein uL10 family. In terms of assembly, part of the ribosomal stalk of the 50S ribosomal subunit. The N-terminus interacts with L11 and the large rRNA to form the base of the stalk. The C-terminus forms an elongated spine to which L12 dimers bind in a sequential fashion forming a multimeric L10(L12)X complex.

In terms of biological role, forms part of the ribosomal stalk, playing a central role in the interaction of the ribosome with GTP-bound translation factors. This is Large ribosomal subunit protein uL10 from Shewanella oneidensis (strain ATCC 700550 / JCM 31522 / CIP 106686 / LMG 19005 / NCIMB 14063 / MR-1).